The chain runs to 183 residues: ATP synthase subunit b 2 (183 aa).

The helical transmembrane segment at 27-47 (PSFYAFLALLIFFGLLLHMGV) threads the bilayer.

The protein belongs to the ATPase B chain family. In terms of assembly, F-type ATPases have 2 components, F(1) - the catalytic core - and F(0) - the membrane proton channel. F(1) has five subunits: alpha(3), beta(3), gamma(1), delta(1), epsilon(1). F(0) has three main subunits: a(1), b(2) and c(10-14). The alpha and beta chains form an alternating ring which encloses part of the gamma chain. F(1) is attached to F(0) by a central stalk formed by the gamma and epsilon chains, while a peripheral stalk is formed by the delta and b chains.

The protein localises to the cell inner membrane. F(1)F(0) ATP synthase produces ATP from ADP in the presence of a proton or sodium gradient. F-type ATPases consist of two structural domains, F(1) containing the extramembraneous catalytic core and F(0) containing the membrane proton channel, linked together by a central stalk and a peripheral stalk. During catalysis, ATP synthesis in the catalytic domain of F(1) is coupled via a rotary mechanism of the central stalk subunits to proton translocation. Functionally, component of the F(0) channel, it forms part of the peripheral stalk, linking F(1) to F(0). The polypeptide is ATP synthase subunit b 2 (Maricaulis maris (strain MCS10) (Caulobacter maris)).